Reading from the N-terminus, the 599-residue chain is Group II intron-encoded protein LtrA (599 aa).

The Reverse transcriptase domain occupies 70 to 361 (IIQSLKDGTY…QPARFLGYDI (292 aa)). The tract at residues 381-549 (NGSVELLIPL…AKCCELCGTS (169 aa)) is intron maturase type-2.

In the N-terminal section; belongs to the bacterial reverse transcriptase family. Homodimer. The cofactor is Mg(2+).

The enzyme catalyses DNA(n) + a 2'-deoxyribonucleoside 5'-triphosphate = DNA(n+1) + diphosphate. Its function is as follows. Multifunctional protein that promotes group II intron splicing and mobility by acting both on RNA and DNA. It has three activities: reverse transcriptase (RT) for intron duplication, maturase to promote splicing, and DNA endonuclease for site-specific cleavage of recipient alleles. The intron-encoded protein promotes splicing by facilitating the formation of the catalytically active structure of the intron RNA. After splicing, the protein remains bound to the excised intron lariat RNA, forming ribonucleoprotein particles, and cleaving the antisense strand of the recipient DNA in the 3' exon. After DNA cleavage, retrohoming occurs by a target DNA-primed reverse transcription of the intron RNA that had reverse spliced into the sense strand of the recipient DNA. It also contributes to the recognition of the DNA target site and acts as a repressor of its own translation. This chain is Group II intron-encoded protein LtrA (ltrA), found in Lactococcus lactis subsp. cremoris (Streptococcus cremoris).